Here is a 202-residue protein sequence, read N- to C-terminus: Ras-related protein Rab-18 (202 aa).

12 residues coordinate GTP: serine 20, glycine 23, lysine 24, serine 25, serine 26, aspartate 37, proline 38, threonine 43, glycine 69, lysine 126, aspartate 128, and alanine 155. Positions 40 to 48 (QAATIGVDF) match the Effector region motif. Positions 183 to 202 (RPTFRLGQPTDTSSGNLCGC) are disordered. Over residues 191–202 (PTDTSSGNLCGC) the composition is skewed to polar residues. Residues cysteine 200 and cysteine 202 are each lipidated (S-geranylgeranyl cysteine). At cysteine 202 the chain carries Cysteine methyl ester.

Belongs to the small GTPase superfamily. Rab family.

The catalysed reaction is GTP + H2O = GDP + phosphate + H(+). In terms of biological role, the small GTPases Rab are key regulators of intracellular membrane trafficking, from the formation of transport vesicles to their fusion with membranes. Rabs cycle between an inactive GDP-bound form and an active GTP-bound form that is able to recruit to membranes different sets of downstream effectors directly responsible for vesicle formation, movement, tethering and fusion. Plays a role in apical endocytosis/recycling. May be implicated in transport between the plasma membrane and early endosomes. The protein is Ras-related protein Rab-18 (rab-18) of Caenorhabditis briggsae.